Reading from the N-terminus, the 607-residue chain is Elongation factor 4 (607 aa).

Residues 11-193 enclose the tr-type G domain; that stretch reads SKIRNFSIIA…QIVEKVPAPT (183 aa). Residues 23–28 and 140–143 each bind GTP; these read DHGKST and NKID.

It belongs to the TRAFAC class translation factor GTPase superfamily. Classic translation factor GTPase family. LepA subfamily.

The protein resides in the cell membrane. The catalysed reaction is GTP + H2O = GDP + phosphate + H(+). In terms of biological role, required for accurate and efficient protein synthesis under certain stress conditions. May act as a fidelity factor of the translation reaction, by catalyzing a one-codon backward translocation of tRNAs on improperly translocated ribosomes. Back-translocation proceeds from a post-translocation (POST) complex to a pre-translocation (PRE) complex, thus giving elongation factor G a second chance to translocate the tRNAs correctly. Binds to ribosomes in a GTP-dependent manner. This Bacillus anthracis (strain CDC 684 / NRRL 3495) protein is Elongation factor 4.